A 119-amino-acid polypeptide reads, in one-letter code: Large ribosomal subunit protein uL14 (119 aa).

This sequence belongs to the universal ribosomal protein uL14 family. In terms of assembly, part of the 50S ribosomal subunit. Forms a cluster with proteins L3 and L19. In the 70S ribosome, L14 and L19 interact and together make contacts with the 16S rRNA in bridges B5 and B8.

Functionally, binds to 23S rRNA. Forms part of two intersubunit bridges in the 70S ribosome. This Ehrlichia chaffeensis (strain ATCC CRL-10679 / Arkansas) protein is Large ribosomal subunit protein uL14.